We begin with the raw amino-acid sequence, 423 residues long: AP-1 complex subunit mu-1 (423 aa).

N-acetylserine is present on serine 2. 3 positions are modified to phosphothreonine: threonine 152, threonine 154, and threonine 223. Residues lysine 168–arginine 421 form the MHD domain.

The protein belongs to the adaptor complexes medium subunit family. As to quaternary structure, adaptor protein complex 1 (AP-1) is a heterotetramer composed of two large adaptins (gamma-type subunit AP1G1 and beta-type subunit AP1B1), a medium adaptin (mu-type subunit AP1M1 or AP1M2) and a small adaptin (sigma-type subunit AP1S1 or AP1S2 or AP1S3). Interacts with MARCHF11. In terms of processing, phosphorylation of membrane-bound AP1M1/AP1M2 increases its affinity for sorting signals.

The protein localises to the golgi apparatus. The protein resides in the cytoplasmic vesicle. Its subcellular location is the clathrin-coated vesicle membrane. In terms of biological role, subunit of clathrin-associated adaptor protein complex 1 that plays a role in protein sorting in the trans-Golgi network (TGN) and endosomes. The AP complexes mediate the recruitment of clathrin to membranes and the recognition of sorting signals within the cytosolic tails of transmembrane cargo molecules. This chain is AP-1 complex subunit mu-1 (Ap1m1), found in Mus musculus (Mouse).